A 264-amino-acid polypeptide reads, in one-letter code: Ferric siderophore reductase (264 aa).

The FAD-binding FR-type domain maps to 9-127 (SPTRLTYISD…PGPLKMNRFD (119 aa)). Positions 73, 74, 76, 90, 92, 96, 100, 101, 247, 249, 250, and 252 each coordinate FAD.

This sequence belongs to the SIP oxidoreductase family. FAD is required as a cofactor.

Ferric-siderophore reductase involved in iron removal from the siderophores after their transport into the cell. Catalyzes the reduction of the ferric iron bound to the hydroxamate siderophores produced by Shewanella to ferrous iron. Can use a ferredoxin as electron donor. Despite the clear evidence for the interaction with NAD(P)H, no direct reduction of the enzyme by these compounds is observed, nor consumption of NAD(P)H, suggesting that NADH and NADPH are not the physiological electron donors. The chain is Ferric siderophore reductase from Shewanella frigidimarina (strain NCIMB 400).